The following is a 945-amino-acid chain: Protein translocase subunit SecA (945 aa).

Residues glutamine 90, 108–112 (GEGKT), and aspartate 509 contribute to the ATP site. The segment at 533–568 (VKPEDGHKPPVPLQRRSESSGFGEDKDVTTDNSKPL) is disordered. Over residues 547-561 (RRSESSGFGEDKDVT) the composition is skewed to basic and acidic residues.

The protein belongs to the SecA family. As to quaternary structure, monomer and homodimer. Part of the essential Sec protein translocation apparatus which comprises SecA, SecYEG and auxiliary proteins SecDF. Other proteins may also be involved.

It localises to the cell inner membrane. It is found in the cellular thylakoid membrane. Its subcellular location is the cytoplasm. It carries out the reaction ATP + H2O + cellular proteinSide 1 = ADP + phosphate + cellular proteinSide 2.. Part of the Sec protein translocase complex. Interacts with the SecYEG preprotein conducting channel. Has a central role in coupling the hydrolysis of ATP to the transfer of proteins into and across the cell membrane, serving as an ATP-driven molecular motor driving the stepwise translocation of polypeptide chains across the membrane. Functionally, probably participates in protein translocation into and across both the cytoplasmic and thylakoid membranes in cyanobacterial cells. In Prochlorococcus marinus (strain MIT 9211), this protein is Protein translocase subunit SecA.